The sequence spans 341 residues: MKVSDFDYSLPEERIAKYPPDNRGATRLLVLNRHTGSVQHARYSNLEAFLGYGDLLVINTTKVVRARLFAVKQTGAAIELMLLEKHEGPQNLALYRGRLKKGDRLLAHGHELIVEELAGQGVARLSVEGIESVHALFQNHAEVPIPPYLKRDAEAVDRERYQTVFAEHPGSVAAPTASLNMTPELLLKLEKGGVATAVMTLHVGLGTFLPIRTETMEEHVMHREFYSIPARTIEQIHETRRSGGRVVALGTTVTRALEHAATRISAFSGSDPLVGEADIFIHPGYSFQTIDALLTNFHAPRSTVLMLTAAFAGADHLRAAYREAVEKRYDFLSYGDSMLIS.

It belongs to the QueA family. As to quaternary structure, monomer.

The protein resides in the cytoplasm. It catalyses the reaction 7-aminomethyl-7-carbaguanosine(34) in tRNA + S-adenosyl-L-methionine = epoxyqueuosine(34) in tRNA + adenine + L-methionine + 2 H(+). It functions in the pathway tRNA modification; tRNA-queuosine biosynthesis. Its function is as follows. Transfers and isomerizes the ribose moiety from AdoMet to the 7-aminomethyl group of 7-deazaguanine (preQ1-tRNA) to give epoxyqueuosine (oQ-tRNA). The chain is S-adenosylmethionine:tRNA ribosyltransferase-isomerase from Chlorobium phaeovibrioides (strain DSM 265 / 1930) (Prosthecochloris vibrioformis (strain DSM 265)).